A 99-amino-acid chain; its full sequence is Phosphoribosyl-ATP pyrophosphatase (99 aa).

This sequence belongs to the PRA-PH family.

The protein localises to the cytoplasm. The catalysed reaction is 1-(5-phospho-beta-D-ribosyl)-ATP + H2O = 1-(5-phospho-beta-D-ribosyl)-5'-AMP + diphosphate + H(+). It functions in the pathway amino-acid biosynthesis; L-histidine biosynthesis; L-histidine from 5-phospho-alpha-D-ribose 1-diphosphate: step 2/9. This Methanococcoides burtonii (strain DSM 6242 / NBRC 107633 / OCM 468 / ACE-M) protein is Phosphoribosyl-ATP pyrophosphatase.